Consider the following 395-residue polypeptide: Inactive serine protease 54 (395 aa).

The N-terminal stretch at 1–30 (MVSAAGLSGDGKMRGVLLVLLGLLYSSTSC) is a signal peptide. One can recognise a Peptidase S1 domain in the interval 37–269 (VFYGPDPKEG…YSKWITSKAE (233 aa)). Asn123 carries N-linked (GlcNAc...) asparagine glycosylation. 3 disulfides stabilise this stretch: Cys164–Cys227, Cys195–Cys205, and Cys217–Cys248. Positions 324 to 348 (RLGNSSRDSLDVREKDVKESGRSPE) are disordered. Asn327 is a glycosylation site (N-linked (GlcNAc...) asparagine). A compositionally biased stretch (basic and acidic residues) spans 331-345 (DSLDVREKDVKESGR).

This sequence belongs to the peptidase S1 family. Plasma kallikrein subfamily.

The protein resides in the secreted. This Homo sapiens (Human) protein is Inactive serine protease 54 (PRSS54).